Reading from the N-terminus, the 1104-residue chain is MLPLRAFARLAQRPRLSRPTQLARSSLPRPSPSRPAAHYLALAPAPSTRFLHSSPPVLKEKRWLNNTPPEDDGEDGQNPKQDDQVEKPLPDAESSKSAEERAKSQSSKPDIKASSSDSVSSSAPAPGSADGGSPPGAGGPKEVAKPVIPEIYPQVLAIPITHRPLFPGFYKAVTVRSPPVIKAIRELQAHGQPYVGAFLLKDSTVDSDVVTDINQVQPVGVFCQITSCFTSQEGEGKPEALTAVLFPHRRIKINELVKSSGTKGDGTVGVGGLVEGSQDSAKGEGEVKSFESEVPGVEEVREELGTVSIDSEQPDVHKENRDLETKEVTQIDFLHSLLPQVSLTNVSNLSTEPYEKDSQVIRAIMSELISVFKEIAQLQPMFREQVTSFAISNTSSQVFDEPDKLADLAAVVSTADVSDLQAVLSSTSIEDRLQRALVLLKKELINAQLQFKISRDVDTKIQKRQREYYLMEQLKGIKKELGMESDGKDKLVEGFKEKASKLAMPEGVRKVFDEELNKLVHLEPAASEFNVTRNYIDWLTQVPWGVHTPENYNISHAIKILDEDHYGLKDVKDRILEFMAIGKLRGSVEGKILCLVGPPGVGKTSIGKSIAKALGRQFFRFSVGGLTDVAEIKGHRRTYIGAMPGKPIQALKKVATENPLILIDEVDKISKAYNGDPASALLEMLDPEQNKSFLDHYLDVPIDLSKVLFVCTANVLETIPGPLLDRMEVLEVSGYVSAEKMNIAERYLSPQAKVAAGLEDVNIELEPGAIEALIRYYCRESGVRNLKKHIDKIYRKAAFKIVTDLGESGLPEPATPPAENQVEAQYPDIKPASELTSNVIPGTEVSGVDTKTDVTTVPREPMKVPAGIHVKVTQENLKDYVGPPLYHKDRLYTHSPPAGVSTGLGYLGNGSGAVMPVEINSMPGKGNLQLTGKLGEVIRESAQIAMSWVKSNAYLLGITKSEAEATLNDRDVHLHMPEGGIGKEGPSAGTAILTAFVSLFTKTRVDPDIAMTGEISLLGQVLPVGGLKEKILAAHRAGIKKLIVPAGCKPDIDENVPESVKGGIEFVFVEDVRQVLHEAFRGTEVEKRWQETLPMEEEPQRERH.

The N-terminal 58 residues, 1 to 58, are a transit peptide targeting the mitochondrion; sequence MLPLRAFARLAQRPRLSRPTQLARSSLPRPSPSRPAAHYLALAPAPSTRFLHSSPPVL. A disordered region spans residues 8–144; sequence ARLAQRPRLS…PGAGGPKEVA (137 aa). Residues 22 to 46 are compositionally biased toward low complexity; that stretch reads LARSSLPRPSPSRPAAHYLALAPAP. Residues 80–103 are compositionally biased toward basic and acidic residues; sequence KQDDQVEKPLPDAESSKSAEERAK. A compositionally biased stretch (low complexity) spans 104–128; sequence SQSSKPDIKASSSDSVSSSAPAPGS. The segment covering 129-139 has biased composition (gly residues); that stretch reads ADGGSPPGAGG. The Lon N-terminal domain occupies 155-444; sequence VLAIPITHRP…RALVLLKKEL (290 aa). 597–604 contributes to the ATP binding site; it reads GPPGVGKT. A Lon proteolytic domain is found at 895–1082; that stretch reads SPPAGVSTGL…RQVLHEAFRG (188 aa). Active-site residues include Ser-987 and Lys-1030.

This sequence belongs to the peptidase S16 family. As to quaternary structure, homohexamer or homoheptamer. Organized in a ring with a central cavity.

Its subcellular location is the mitochondrion matrix. The enzyme catalyses Hydrolysis of proteins in presence of ATP.. ATP-dependent serine protease that mediates the selective degradation of misfolded, unassembled or oxidatively damaged polypeptides as well as certain short-lived regulatory proteins in the mitochondrial matrix. May also have a chaperone function in the assembly of inner membrane protein complexes. Participates in the regulation of mitochondrial gene expression and in the maintenance of the integrity of the mitochondrial genome. Binds to mitochondrial DNA in a site-specific manner. This is Lon protease homolog, mitochondrial from Cryptococcus neoformans var. neoformans serotype D (strain B-3501A) (Filobasidiella neoformans).